Reading from the N-terminus, the 289-residue chain is MSGGGDATVSAELIAARKRLQAAGVADPLVDARLLIADVTGFSLTDFVMKPEHPVTQDESARIAAMIERRAEGEPVHRILGHREFHGLDLLLSKETLEPRPDTEVLVDTLLPALKEAVSRKGSARILDLGTGTGAICLALLKECAQASGIGSDISADALETAAKNAARNGLDSRFETIRSNWFEKISGRFDIIVSNPPYIRTDIVATLDPEVRNHDPMAALDGGQDGLAPYRLIAADAGRFLVENGTVGVEIGFDQRLDVSAIFASHGFSLLDAVKDYGGNDRVLTFRR.

Residues 130–134 (GTGTG), Asp153, Trp182, and Asn196 each bind S-adenosyl-L-methionine. Substrate is bound at residue 196-199 (NPPY).

It belongs to the protein N5-glutamine methyltransferase family. PrmC subfamily.

It catalyses the reaction L-glutaminyl-[peptide chain release factor] + S-adenosyl-L-methionine = N(5)-methyl-L-glutaminyl-[peptide chain release factor] + S-adenosyl-L-homocysteine + H(+). Functionally, methylates the class 1 translation termination release factors RF1/PrfA and RF2/PrfB on the glutamine residue of the universally conserved GGQ motif. The chain is Release factor glutamine methyltransferase from Agrobacterium fabrum (strain C58 / ATCC 33970) (Agrobacterium tumefaciens (strain C58)).